A 316-amino-acid chain; its full sequence is Homoserine kinase (316 aa).

97–107 lines the ATP pocket; that stretch reads PHSRGLGSSAA.

Belongs to the GHMP kinase family. Homoserine kinase subfamily.

It is found in the cytoplasm. It catalyses the reaction L-homoserine + ATP = O-phospho-L-homoserine + ADP + H(+). It participates in amino-acid biosynthesis; L-threonine biosynthesis; L-threonine from L-aspartate: step 4/5. In terms of biological role, catalyzes the ATP-dependent phosphorylation of L-homoserine to L-homoserine phosphate. In Mycobacterium tuberculosis (strain ATCC 25618 / H37Rv), this protein is Homoserine kinase.